Reading from the N-terminus, the 200-residue chain is Superoxide dismutase [Mn], mitochondrial (200 aa).

4 residues coordinate Mn(2+): His-27, His-72, Asp-157, and His-161.

This sequence belongs to the iron/manganese superoxide dismutase family. Requires Mn(2+) as cofactor.

It is found in the mitochondrion matrix. It catalyses the reaction 2 superoxide + 2 H(+) = H2O2 + O2. Functionally, destroys superoxide anion radicals which are normally produced within the cells and which are toxic to biological systems. The chain is Superoxide dismutase [Mn], mitochondrial (sod) from Agaricus bisporus (White button mushroom).